The chain runs to 121 residues: Large ribosomal subunit protein bL12 (121 aa).

It belongs to the bacterial ribosomal protein bL12 family. As to quaternary structure, homodimer. Part of the ribosomal stalk of the 50S ribosomal subunit. Forms a multimeric L10(L12)X complex, where L10 forms an elongated spine to which 2 to 4 L12 dimers bind in a sequential fashion. Binds GTP-bound translation factors.

Its function is as follows. Forms part of the ribosomal stalk which helps the ribosome interact with GTP-bound translation factors. Is thus essential for accurate translation. This is Large ribosomal subunit protein bL12 from Shewanella pealeana (strain ATCC 700345 / ANG-SQ1).